A 127-amino-acid chain; its full sequence is Aspartate 1-decarboxylase (127 aa).

The active-site Schiff-base intermediate with substrate; via pyruvic acid is Ser-25. Pyruvic acid (Ser) is present on Ser-25. Substrate is bound at residue Thr-57. The Proton donor role is filled by Tyr-58. 73–75 (GAA) contacts substrate.

Belongs to the PanD family. Heterooctamer of four alpha and four beta subunits. Requires pyruvate as cofactor. In terms of processing, is synthesized initially as an inactive proenzyme, which is activated by self-cleavage at a specific serine bond to produce a beta-subunit with a hydroxyl group at its C-terminus and an alpha-subunit with a pyruvoyl group at its N-terminus.

The protein localises to the cytoplasm. The enzyme catalyses L-aspartate + H(+) = beta-alanine + CO2. The protein operates within cofactor biosynthesis; (R)-pantothenate biosynthesis; beta-alanine from L-aspartate: step 1/1. Its function is as follows. Catalyzes the pyruvoyl-dependent decarboxylation of aspartate to produce beta-alanine. This chain is Aspartate 1-decarboxylase, found in Bacillus subtilis (strain 168).